We begin with the raw amino-acid sequence, 300 residues long: Acetyl-coenzyme A carboxylase carboxyl transferase subunit beta 2 (300 aa).

One can recognise a CoA carboxyltransferase N-terminal domain in the interval 26 to 294 (VWVKCPSCRE…SGAYSSEAVA (269 aa)). Zn(2+) is bound by residues Cys30, Cys33, Cys49, and Cys51. Residues 30-51 (CPSCRELIYHKQLAERMKVCRC) form a C4-type zinc finger.

Belongs to the AccD/PCCB family. Acetyl-CoA carboxylase is a heterohexamer composed of biotin carboxyl carrier protein (AccB), biotin carboxylase (AccC) and two subunits each of ACCase subunit alpha (AccA) and ACCase subunit beta (AccD). Requires Zn(2+) as cofactor.

The protein resides in the cytoplasm. The catalysed reaction is N(6)-carboxybiotinyl-L-lysyl-[protein] + acetyl-CoA = N(6)-biotinyl-L-lysyl-[protein] + malonyl-CoA. The protein operates within lipid metabolism; malonyl-CoA biosynthesis; malonyl-CoA from acetyl-CoA: step 1/1. Its function is as follows. Component of the acetyl coenzyme A carboxylase (ACC) complex. Biotin carboxylase (BC) catalyzes the carboxylation of biotin on its carrier protein (BCCP) and then the CO(2) group is transferred by the transcarboxylase to acetyl-CoA to form malonyl-CoA. In Roseiflexus castenholzii (strain DSM 13941 / HLO8), this protein is Acetyl-coenzyme A carboxylase carboxyl transferase subunit beta 2.